The chain runs to 248 residues: MVDREQLVQKARLAEQAERYDDMAAAMKSVTELNEALSNEERNLLSVAYKNVVGARRSSWRVISSIEQKTSADGNEKKIEMVRAYREKIEKELEAVCQDVLNLLDNYLIKNCNETQHESKVFYLKMKGDYYRYLAEVATGEKRATVIESSEKAYNEAHEISKEHMQPTHPIRLGLALNYSVFYYEIQNAPEQACHLAKTAFDDAIAELDTLNEDSYQDSTLIMQLLRDNLTLWTSDQQDDEGGEGNKD.

It belongs to the 14-3-3 family. Homodimer, and heterodimer with other family members. Expressed in brain, gill, heart, intestine, kidney, liver, ovary, skeletal muscle, spleen and testis.

Its subcellular location is the cytoplasm. Adapter protein implicated in the regulation of a large spectrum of both general and specialized signaling pathways. Binds to a large number of partners, usually by recognition of a phosphoserine or phosphothreonine motif. Binding generally results in the modulation of the activity of the binding partner. The protein is 14-3-3 protein gamma-2 of Oncorhynchus mykiss (Rainbow trout).